The following is a 274-amino-acid chain: Diaminopimelate epimerase (274 aa).

Positions 11, 44, and 64 each coordinate substrate. Catalysis depends on cysteine 73, which acts as the Proton donor. Substrate is bound by residues 74-75 (GN), asparagine 157, asparagine 190, and 208-209 (ER). The Proton acceptor role is filled by cysteine 217. Position 218–219 (218–219 (GS)) interacts with substrate.

This sequence belongs to the diaminopimelate epimerase family. In terms of assembly, homodimer.

It localises to the cytoplasm. It carries out the reaction (2S,6S)-2,6-diaminopimelate = meso-2,6-diaminopimelate. The protein operates within amino-acid biosynthesis; L-lysine biosynthesis via DAP pathway; DL-2,6-diaminopimelate from LL-2,6-diaminopimelate: step 1/1. Functionally, catalyzes the stereoinversion of LL-2,6-diaminopimelate (L,L-DAP) to meso-diaminopimelate (meso-DAP), a precursor of L-lysine and an essential component of the bacterial peptidoglycan. This chain is Diaminopimelate epimerase, found in Erwinia tasmaniensis (strain DSM 17950 / CFBP 7177 / CIP 109463 / NCPPB 4357 / Et1/99).